Consider the following 257-residue polypeptide: Indole-3-glycerol phosphate synthase (257 aa).

Belongs to the TrpC family.

The catalysed reaction is 1-(2-carboxyphenylamino)-1-deoxy-D-ribulose 5-phosphate + H(+) = (1S,2R)-1-C-(indol-3-yl)glycerol 3-phosphate + CO2 + H2O. It participates in amino-acid biosynthesis; L-tryptophan biosynthesis; L-tryptophan from chorismate: step 4/5. The chain is Indole-3-glycerol phosphate synthase from Halalkalibacterium halodurans (strain ATCC BAA-125 / DSM 18197 / FERM 7344 / JCM 9153 / C-125) (Bacillus halodurans).